A 208-amino-acid polypeptide reads, in one-letter code: Large ribosomal subunit protein uL3 (208 aa).

The segment at 117 to 149 (FQGVIKRHGQSRGPMAHGSRYHRRPGSMGPVSP) is disordered.

Belongs to the universal ribosomal protein uL3 family. As to quaternary structure, part of the 50S ribosomal subunit. Forms a cluster with proteins L14 and L19.

In terms of biological role, one of the primary rRNA binding proteins, it binds directly near the 3'-end of the 23S rRNA, where it nucleates assembly of the 50S subunit. The chain is Large ribosomal subunit protein uL3 from Streptococcus equi subsp. equi (strain 4047).